Reading from the N-terminus, the 177-residue chain is Large ribosomal subunit protein uL6 (177 aa).

It belongs to the universal ribosomal protein uL6 family. In terms of assembly, part of the 50S ribosomal subunit.

In terms of biological role, this protein binds to the 23S rRNA, and is important in its secondary structure. It is located near the subunit interface in the base of the L7/L12 stalk, and near the tRNA binding site of the peptidyltransferase center. The polypeptide is Large ribosomal subunit protein uL6 (Stutzerimonas stutzeri (strain A1501) (Pseudomonas stutzeri)).